The chain runs to 444 residues: NAD(P)-specific glutamate dehydrogenase (444 aa).

Substrate contacts are provided by K88, Q109, and K112. Catalysis depends on K124, which acts as the Proton donor. G163 is a substrate binding site. NADP(+) contacts are provided by T207 and N238. S376 contributes to the substrate binding site.

This sequence belongs to the Glu/Leu/Phe/Val dehydrogenases family. As to quaternary structure, homohexamer.

The enzyme catalyses L-glutamate + NAD(+) + H2O = 2-oxoglutarate + NH4(+) + NADH + H(+). It catalyses the reaction L-glutamate + NADP(+) + H2O = 2-oxoglutarate + NH4(+) + NADPH + H(+). In terms of biological role, catalyzes the reversible oxidative deamination of glutamate to alpha-ketoglutarate and ammonia. P.ruminicola possess both NADP(H)- and NAD(H)-dependent activities on the same enzyme, suggesting that both anabolic and catabolic forms of the enzyme might occur. This chain is NAD(P)-specific glutamate dehydrogenase (gdhA), found in Xylanibacter ruminicola (Prevotella ruminicola).